Consider the following 440-residue polypeptide: MDEILAKAGSQAVTFAIKSGISIASTYALKTITNFVVQIPKDDARRIDQLKFKLESRMAIVSSAIDLIKLVAARGNTNLQITLRLTKDLKEEIDRFDEKINEMTQKVEGSRSAKTQNEAIKAVENYIKDLLLRIEEITPFINLSLTTSGANLNSALPYQLSPGLLLKASDFVSENNRKYEKAMKSNEKGTGDKEILKVQVGPTFEVTLFSIFYNLTSENNGQSGIVWKEDMKRAKARIYRLNSTGRKYDYFMKIEQDFNDGRYHEDDDKEDTPQELAIDLNHIKKLFFSVSGKLLRLEEQDSPVLVLKIDRSDDKENESSEGDKGLLDDITWYAVSGYEAIEEDEEEDEEEDEEEGKDGEERKEEEEEENKLEDKDSSITLLEYIIRLTSLQSNDQKSILEVSDERLSIYLNDENTNSRKDRISNSTIEETEKKLKNLKL.

The RanBD1 domain maps to 1–314; it reads MDEILAKAGS…LVLKIDRSDD (314 aa). Thr272 is subject to Phosphothreonine. Over residues 341–371 the composition is skewed to acidic residues; the sequence is IEEDEEEDEEEDEEEGKDGEERKEEEEEENK. Positions 341–375 are disordered; it reads IEEDEEEDEEEDEEEGKDGEERKEEEEEENKLEDK.

As to quaternary structure, interacts with GSP1.

The protein resides in the cytoplasm. The protein localises to the nucleus. Its function is as follows. Important for the export of protein containing nuclear export signal (NES) out of the nucleus. Stimulates the GTPase activity of GSP1. In Saccharomyces cerevisiae (strain ATCC 204508 / S288c) (Baker's yeast), this protein is Ran-specific GTPase-activating protein 30 (YRB30).